We begin with the raw amino-acid sequence, 82 residues long: UPF0248 protein Mevan_1298 (82 aa).

This sequence belongs to the UPF0248 family.

This chain is UPF0248 protein Mevan_1298, found in Methanococcus vannielii (strain ATCC 35089 / DSM 1224 / JCM 13029 / OCM 148 / SB).